The sequence spans 184 residues: Ribosome maturation factor RimM (184 aa).

The region spanning 112-184 (TDSYYWIDLI…SNKTISLDWQ (73 aa)) is the PRC barrel domain.

This sequence belongs to the RimM family. In terms of assembly, binds ribosomal protein uS19.

The protein resides in the cytoplasm. Its function is as follows. An accessory protein needed during the final step in the assembly of 30S ribosomal subunit, possibly for assembly of the head region. Essential for efficient processing of 16S rRNA. May be needed both before and after RbfA during the maturation of 16S rRNA. It has affinity for free ribosomal 30S subunits but not for 70S ribosomes. In Polynucleobacter necessarius subsp. necessarius (strain STIR1), this protein is Ribosome maturation factor RimM.